Here is a 503-residue protein sequence, read N- to C-terminus: Lysine--tRNA ligase (503 aa).

Mg(2+)-binding residues include E413 and E420.

The protein belongs to the class-II aminoacyl-tRNA synthetase family. As to quaternary structure, homodimer. Mg(2+) serves as cofactor.

The protein resides in the cytoplasm. It carries out the reaction tRNA(Lys) + L-lysine + ATP = L-lysyl-tRNA(Lys) + AMP + diphosphate. The chain is Lysine--tRNA ligase from Mannheimia succiniciproducens (strain KCTC 0769BP / MBEL55E).